A 128-amino-acid chain; its full sequence is Glycine cleavage system H protein (128 aa).

The 83-residue stretch at 25–107 (TITVGITHHA…YGAGWFFKLK (83 aa)) folds into the Lipoyl-binding domain. Residue Lys-66 is modified to N6-lipoyllysine.

Belongs to the GcvH family. As to quaternary structure, the glycine cleavage system is composed of four proteins: P, T, L and H. Requires (R)-lipoate as cofactor.

Functionally, the glycine cleavage system catalyzes the degradation of glycine. The H protein shuttles the methylamine group of glycine from the P protein to the T protein. The sequence is that of Glycine cleavage system H protein from Neisseria meningitidis serogroup B (strain ATCC BAA-335 / MC58).